The primary structure comprises 167 residues: Secretion monitor (167 aa).

Positions 1–36 (MIGILNRWRQFGRRYFWPHLLLGMVAASFGLPQASA) are cleaved as a signal peptide.

Belongs to the SecM family.

Its subcellular location is the cytoplasm. The protein localises to the cytosol. It is found in the periplasm. Regulates secA expression by translational coupling of the secM secA operon. Translational pausing at a specific Pro residue 5 residues before the end of the protein may allow disruption of a mRNA repressor helix that normally suppresses secA translation initiation. This is Secretion monitor from Erwinia tasmaniensis (strain DSM 17950 / CFBP 7177 / CIP 109463 / NCPPB 4357 / Et1/99).